Consider the following 248-residue polypeptide: Mannose-binding protein C (248 aa).

Positions 1-20 are cleaved as a signal peptide; sequence MSLFPSLPLLLLSVVATSYS. Positions 42 to 99 constitute a Collagen-like domain; it reads GINGFPGKDGRDGTKGEKGEPGQGLRGLQGPPGKLGPPGNPGPSGSPGPKGQKGDPGE. The tract at residues 43-111 is disordered; the sequence is INGFPGKDGR…DCDSSLAASE (69 aa). 4-hydroxyproline is present on proline 47. The span at 49–61 shows a compositional bias: basic and acidic residues; the sequence is KDGRDGTKGEKGE. A 4-hydroxyproline mark is found at proline 73, proline 79, proline 82, and proline 88. A compositionally biased stretch (pro residues) spans 75 to 87; the sequence is KLGPPGNPGPSGS. Positions 112-130 form a coiled coil; the sequence is RKALQTEMAHIKKWLTFSL. Residues 134-245 form the C-type lectin domain; that stretch reads VGNKFFLTNG…CSSSHLALCE (112 aa). Intrachain disulfides connect cysteine 155–cysteine 244 and cysteine 222–cysteine 236.

Oligomeric complex of 3 or more homotrimers. Interacts with MASP1 and MASP2. Interacts with MEP1A and MEP1B and may inhibit their catalytic activity. In terms of processing, hydroxylation on proline residues within the sequence motif, GXPG, is most likely to be 4-hydroxy as this fits the requirement for 4-hydroxylation in vertebrates.

It localises to the secreted. Functionally, calcium-dependent lectin involved in innate immune defense. Binds mannose, fucose and N-acetylglucosamine on different microorganisms and activates the lectin complement pathway. Binds to late apoptotic cells, as well as to apoptotic blebs and to necrotic cells, but not to early apoptotic cells, facilitating their uptake by macrophages. In Trachypithecus obscurus (Dusky leaf-monkey), this protein is Mannose-binding protein C (MBL2).